Consider the following 493-residue polypeptide: Proline--tRNA ligase (493 aa).

This sequence belongs to the class-II aminoacyl-tRNA synthetase family. ProS type 3 subfamily. In terms of assembly, homodimer.

The protein localises to the cytoplasm. The catalysed reaction is tRNA(Pro) + L-proline + ATP = L-prolyl-tRNA(Pro) + AMP + diphosphate. Its function is as follows. Catalyzes the attachment of proline to tRNA(Pro) in a two-step reaction: proline is first activated by ATP to form Pro-AMP and then transferred to the acceptor end of tRNA(Pro). This chain is Proline--tRNA ligase, found in Porphyromonas gingivalis (strain ATCC 33277 / DSM 20709 / CIP 103683 / JCM 12257 / NCTC 11834 / 2561).